The sequence spans 491 residues: UDP-N-acetylmuramate--L-alanine ligase (491 aa).

An ATP-binding site is contributed by 126–132 (GTHGKTT).

The protein belongs to the MurCDEF family.

The protein resides in the cytoplasm. It catalyses the reaction UDP-N-acetyl-alpha-D-muramate + L-alanine + ATP = UDP-N-acetyl-alpha-D-muramoyl-L-alanine + ADP + phosphate + H(+). Its pathway is cell wall biogenesis; peptidoglycan biosynthesis. Its function is as follows. Cell wall formation. This chain is UDP-N-acetylmuramate--L-alanine ligase, found in Yersinia enterocolitica serotype O:8 / biotype 1B (strain NCTC 13174 / 8081).